The primary structure comprises 842 residues: Xyloglucanase Xgh74A (842 aa).

Positions 1–32 (MVKKFTSKIKAAVFAAVVAATAIFGPAISSQA) are cleaved as a signal peptide. Asp70 (nucleophile) is an active-site residue. 4 BNR repeats span residues 134-144 (RSTDRGETWEK), 185-196 (WRSTDYGVTWSK), 252-262 (YRSTDGGVTWK), and 358-368 (FRSTDGGATWK). The Proton donor role is filled by Asp480. BNR repeat units follow at residues 533-541 (FSYDGGRNW), 577-586 (VTTDNGNSWK), 616-626 (YISTDGGLTFT), 660-671 (WRSTDGGYTFEK), and 708-718 (FRSDDAGKTWV). The region spanning 771-841 (DKGLVGDLNG…LLQAIPELPK (71 aa)) is the Dockerin domain.

The protein belongs to the glycosyl hydrolase 74 family.

Its function is as follows. Hydrolyzes the glucosidic bonds of unbranched Glc residues in tamarind seed xyloglucan, producing XXXG, XLXG, XXLG and XLLG. Has low activity on carboxymethylcellulose, lichenan,hydroxyethylcellulose and glucuronoxylan, and no activity on xylan, polygalaturonic acid, wheat arabinoxylan, rhamnogalacturan, curdlan, laminarin, galactomannan, galactan, arabinan and pachyman or amorphous cellulose. The polypeptide is Xyloglucanase Xgh74A (Acetivibrio thermocellus (strain ATCC 27405 / DSM 1237 / JCM 9322 / NBRC 103400 / NCIMB 10682 / NRRL B-4536 / VPI 7372) (Clostridium thermocellum)).